A 186-amino-acid polypeptide reads, in one-letter code: Cell division protein SepF (186 aa).

Disordered stretches follow at residues Glu-14–Ser-59 and Gly-157–Gln-186. Acidic residues predominate over residues Asp-16–Glu-27. Low complexity predominate over residues Ser-159 to Ser-171.

This sequence belongs to the SepF family. In terms of assembly, homodimer. Interacts with FtsZ.

It localises to the cytoplasm. In terms of biological role, cell division protein that is part of the divisome complex and is recruited early to the Z-ring. Probably stimulates Z-ring formation, perhaps through the cross-linking of FtsZ protofilaments. Its function overlaps with FtsA. The polypeptide is Cell division protein SepF (Synechocystis sp. (strain ATCC 27184 / PCC 6803 / Kazusa)).